The primary structure comprises 91 residues: UPF0213 protein NMC1807 (91 aa).

The GIY-YIG domain maps to 4 to 83 (SNWSVYLILC…AAQKRQLWEQ (80 aa)).

It belongs to the UPF0213 family.

The chain is UPF0213 protein NMC1807 from Neisseria meningitidis serogroup C / serotype 2a (strain ATCC 700532 / DSM 15464 / FAM18).